A 106-amino-acid chain; its full sequence is MPRTFLVVLIYILAGFLCSTSALRKVNEASGIKTDGSGYTIVEECCTESCKLEEVNEYCHLFRGRFFCGEQILDIYNTVCNPRSIRRKRSLTVDKREAKKFIRQRR.

Positions 1-22 are cleaved as a signal peptide; sequence MPRTFLVVLIYILAGFLCSTSA. Residues 23-37 constitute a propeptide that is removed on maturation; that stretch reads LRKVNEASGIKTDGS. Cystine bridges form between C45/C50, C46/C80, and C59/C68. The propeptide at 86–106 is c peptide; the sequence is RRKRSLTVDKREAKKFIRQRR.

Belongs to the insulin family.

It is found in the secreted. In terms of biological role, insulin decreases blood glucose concentration. May have evolved to activate insulin receptors (INSR) in vertebrates. Molecular docking studies reveals unique interaction with the human insulin receptor. In vivo, insulin-like peptide injection reduces blood glucose levels in two models of zebrafish diabetes (streptozotocin- and glucose-induced). Also shorter swimming distance of zebrafish larvae, an effect which is not observed with human insulin. The chain is Insulin-like peptide 04 from Exaiptasia diaphana (Tropical sea anemone).